We begin with the raw amino-acid sequence, 277 residues long: Large ribosomal subunit protein uL2 (277 aa).

2 stretches are compositionally biased toward basic residues: residues 210–219 (RARWAGKRPQ) and 259–277 (TRSKKARSNKFIVRSRNKK). Residues 210–277 (RARWAGKRPQ…KFIVRSRNKK (68 aa)) form a disordered region.

It belongs to the universal ribosomal protein uL2 family. In terms of assembly, part of the 50S ribosomal subunit. Forms a bridge to the 30S subunit in the 70S ribosome.

Functionally, one of the primary rRNA binding proteins. Required for association of the 30S and 50S subunits to form the 70S ribosome, for tRNA binding and peptide bond formation. It has been suggested to have peptidyltransferase activity; this is somewhat controversial. Makes several contacts with the 16S rRNA in the 70S ribosome. The chain is Large ribosomal subunit protein uL2 from Ligilactobacillus salivarius (strain UCC118) (Lactobacillus salivarius).